We begin with the raw amino-acid sequence, 59 residues long: Large ribosomal subunit protein uL30 (59 aa).

This sequence belongs to the universal ribosomal protein uL30 family. Part of the 50S ribosomal subunit.

The sequence is that of Large ribosomal subunit protein uL30 from Pectobacterium atrosepticum (strain SCRI 1043 / ATCC BAA-672) (Erwinia carotovora subsp. atroseptica).